The primary structure comprises 425 residues: MAKNIQAIRGMNDYLPADTAVWQRVEQILKQVLSSYGFSEIRMPIVEQTPLFKRAIGEVTDVVEKEMYTFDDRNGESLTLRPEGTAGCVRAGIEHGLLYNQEQRLWYIGPMFRYERPQKGRYRQFHQIGAEVFGLQGPDIDAELIMMTARWWKALGIADHVSLELNSIGSLEARANYRNALVAFLEQHIEVLDEDCKRRMYSNPLRVLDSKNPDIQALLNDAPALGDYLDDESREHFAGLCHQLDAAGIAYRVNQRLVRGLDYYNRTVFEWVTDSLGAQGTVCAGGRYDGLVEQLGGRATPAVGFAMGLERLVLLVQAVNPEFEPMRVVDVYVIASGDGVQSAAMLLAERLRDALPELKLMTNFGGGNFKKQFARADKWGARIALVLGEDEVANKQLVIKDLRNGEQQTLAQSDAAATLAALLQL.

This sequence belongs to the class-II aminoacyl-tRNA synthetase family. As to quaternary structure, homodimer.

The protein resides in the cytoplasm. It carries out the reaction tRNA(His) + L-histidine + ATP = L-histidyl-tRNA(His) + AMP + diphosphate + H(+). In Erwinia tasmaniensis (strain DSM 17950 / CFBP 7177 / CIP 109463 / NCPPB 4357 / Et1/99), this protein is Histidine--tRNA ligase.